A 130-amino-acid chain; its full sequence is Small ribosomal subunit protein eS17 (130 aa).

The protein belongs to the eukaryotic ribosomal protein eS17 family.

The protein is Small ribosomal subunit protein eS17 (RPS17) of Theileria parva (East coast fever infection agent).